Consider the following 363-residue polypeptide: UDP-N-acetylglucosamine--N-acetylmuramyl-(pentapeptide) pyrophosphoryl-undecaprenol N-acetylglucosamine transferase (363 aa).

Residues 12–14 (TAG), serine 196, and glutamine 291 each bind UDP-N-acetyl-alpha-D-glucosamine.

This sequence belongs to the glycosyltransferase 28 family. MurG subfamily.

Its subcellular location is the cell inner membrane. The enzyme catalyses di-trans,octa-cis-undecaprenyl diphospho-N-acetyl-alpha-D-muramoyl-L-alanyl-D-glutamyl-meso-2,6-diaminopimeloyl-D-alanyl-D-alanine + UDP-N-acetyl-alpha-D-glucosamine = di-trans,octa-cis-undecaprenyl diphospho-[N-acetyl-alpha-D-glucosaminyl-(1-&gt;4)]-N-acetyl-alpha-D-muramoyl-L-alanyl-D-glutamyl-meso-2,6-diaminopimeloyl-D-alanyl-D-alanine + UDP + H(+). Its pathway is cell wall biogenesis; peptidoglycan biosynthesis. Cell wall formation. Catalyzes the transfer of a GlcNAc subunit on undecaprenyl-pyrophosphoryl-MurNAc-pentapeptide (lipid intermediate I) to form undecaprenyl-pyrophosphoryl-MurNAc-(pentapeptide)GlcNAc (lipid intermediate II). This is UDP-N-acetylglucosamine--N-acetylmuramyl-(pentapeptide) pyrophosphoryl-undecaprenol N-acetylglucosamine transferase from Legionella pneumophila (strain Corby).